The chain runs to 572 residues: Acetyl-coenzyme A synthetase (572 aa).

Thr260 is a binding site for CoA. Residues 333–335 (GEP), 354–359 (DTWWMT), Asp440, and Arg455 each bind ATP. Ser463 serves as a coordination point for CoA. Arg466 contacts ATP. Mg(2+)-binding residues include Val477, His479, and Ile482. Lys524 serves as a coordination point for CoA. Lys549 carries the post-translational modification N6-acetyllysine.

It belongs to the ATP-dependent AMP-binding enzyme family. In terms of assembly, interacts with FloT. Requires Mg(2+) as cofactor. Post-translationally, acetylated. Deacetylation by the SIR2-homolog deacetylase activates the enzyme.

It localises to the cell membrane. It is found in the membrane raft. The catalysed reaction is acetate + ATP + CoA = acetyl-CoA + AMP + diphosphate. Catalyzes the conversion of acetate into acetyl-CoA (AcCoA), an essential intermediate at the junction of anabolic and catabolic pathways. AcsA undergoes a two-step reaction. In the first half reaction, AcsA combines acetate with ATP to form acetyl-adenylate (AcAMP) intermediate. In the second half reaction, it can then transfer the acetyl group from AcAMP to the sulfhydryl group of CoA, forming the product AcCoA. Has a role in growth and sporulation on acetate. The protein is Acetyl-coenzyme A synthetase (acsA) of Bacillus subtilis (strain 168).